Reading from the N-terminus, the 274-residue chain is S-adenosylmethionine-dependent nucleotide dehydratase (274 aa).

Positions 1–215 (MAYKVNLHIT…VERHAEVSHD (215 aa)) constitute a Radical SAM core domain. [4Fe-4S] cluster contacts are provided by C13, C17, and C20.

The protein belongs to the radical SAM superfamily. Prokaryotic viperin family. [4Fe-4S] cluster serves as cofactor.

The catalysed reaction is CTP + AH2 + S-adenosyl-L-methionine = 3'-deoxy-3',4'-didehydro-CTP + 5'-deoxyadenosine + L-methionine + A + H2O + H(+). In terms of biological role, expression of pVip6 in E.coli (strain MG1655) confers resistance to phages lambda, P1, SECphi6, SECphi8 and T7. Catalyzes the conversion of cytidine triphosphate (CTP) to 3'-deoxy-3',4'-didehydro-CTP (ddhCTP), probably via a SAM-dependent radical mechanism. The modified nucleotide represses transcription from T7 RNA polymerase-directed genes (possibly by acting as chain terminators), strongly suggesting these nucleotides block viral polymerase transcription. This is S-adenosylmethionine-dependent nucleotide dehydratase from Selenomonas ruminantium.